A 267-amino-acid polypeptide reads, in one-letter code: Glutamate racemase (267 aa).

Residues 13–14 (DS) and 45–46 (YS) each bind substrate. Catalysis depends on Cys-77, which acts as the Proton donor/acceptor. 78–79 (NT) is a binding site for substrate. Cys-188 serves as the catalytic Proton donor/acceptor. Substrate is bound at residue 189 to 190 (TH).

Belongs to the aspartate/glutamate racemases family.

It carries out the reaction L-glutamate = D-glutamate. Its pathway is cell wall biogenesis; peptidoglycan biosynthesis. Functionally, provides the (R)-glutamate required for cell wall biosynthesis. The sequence is that of Glutamate racemase from Histophilus somni (strain 129Pt) (Haemophilus somnus).